Reading from the N-terminus, the 72-residue chain is Brevinin-2GHb (72 aa).

An N-terminal signal peptide occupies residues 1–22 (MFTMKKSLLLLFFLGTVSLSLC). The propeptide occupies 23-42 (EQERGADEDDGGEMTEELKR). A disulfide bridge links cysteine 66 with cysteine 72.

In terms of tissue distribution, expressed by the skin glands.

The protein resides in the secreted. In terms of biological role, antimicrobial peptide. Active against the Gram-positive bacteria S.aureus FDA209P (MIC=16.5 ug/ml) and B.subtilis ATCC 6633 (MIC&gt;64 ug/ml), and the Gram-negative bacteria E.coli O111 (MIC=8.2 ug/ml) and E.coli ATCC 25922 (MIC=8.2 ug/ml). Not active against the fungus C.albicans. The polypeptide is Brevinin-2GHb (Sylvirana guentheri (Gunther's frog)).